The following is a 513-amino-acid chain: HMG box-containing protein 1 (513 aa).

A disordered region spans residues 151 to 181 (RPPPVSSAKSGPAFPHDHWKEETPVRHERAN). Basic and acidic residues predominate over residues 165–181 (PHDHWKEETPVRHERAN). An AXH domain is found at 202 to 343 (WCNSWPSTVW…PPGHPDAINF (142 aa)). Positions 433-501 (CKRPMNAFML…EQKRLNPDCW (69 aa)) form a DNA-binding region, HMG box.

Binds TCF4. Binds RB1. Binds the second PAH repeat of SIN3A. In terms of processing, ubiquitinated by the CTLH E3 ubiquitin-protein ligase complex, leading to subsequent proteasomal degradation. Highly expressed in liver, adipose tissue, lung, brain, spleen, kidney, skeletal muscle and heart.

Its subcellular location is the nucleus. In terms of biological role, transcriptional repressor that binds to the promoter region of target genes. Plays a role in the regulation of the cell cycle and of the Wnt pathway. Binds preferentially to the sequence 5'-TTCATTCATTCA-3'. Binding to the histone H1.0 promoter is enhanced by interaction with RB1. Disrupts the interaction between DNA and TCF4. This is HMG box-containing protein 1 (Hbp1) from Rattus norvegicus (Rat).